The following is a 260-amino-acid chain: Deoxycytidine kinase (260 aa).

S11 and S15 each carry phosphoserine; by CK1. Residue 28–36 (GNIAAGKST) coordinates ATP. Substrate is bound at residue E53. T72 bears the Phosphothreonine; by CK1 mark. Position 74 is a phosphoserine (S74). Substrate-binding residues include Y86 and Q97. Residue E127 is the Proton acceptor of the active site. The substrate site is built by R128 and D133. 188-192 (RIYLR) contributes to the ATP binding site. E197 is a substrate binding site. Residue 240–242 (EDF) participates in ATP binding.

This sequence belongs to the DCK/DGK family. As to quaternary structure, homodimer. In terms of processing, phosphorylated and activated in vitro upon phosphorylation at Ser-74 by CSNK1D/CK1.

Its subcellular location is the nucleus. The catalysed reaction is 2'-deoxycytidine + a ribonucleoside 5'-triphosphate = dCMP + a ribonucleoside 5'-diphosphate + H(+). The enzyme catalyses 2'-deoxyadenosine + ATP = dAMP + ADP + H(+). It catalyses the reaction 2'-deoxyguanosine + ATP = dGMP + ADP + H(+). Phosphorylates the deoxyribonucleosides deoxycytidine, deoxyguanosine and deoxyadenosine. Has broad substrate specificity, and does not display selectivity based on the chirality of the substrate. It is also an essential enzyme for the phosphorylation of numerous nucleoside analogs widely employed as antiviral and chemotherapeutic agents. This chain is Deoxycytidine kinase (DCK), found in Homo sapiens (Human).